A 257-amino-acid polypeptide reads, in one-letter code: RNA polymerase sigma-G factor (257 aa).

Positions Asp-66 to Ile-79 match the Polymerase core binding motif. Residues Gln-228–Lys-247 constitute a DNA-binding region (H-T-H motif).

This sequence belongs to the sigma-70 factor family.

In terms of biological role, sigma factors are initiation factors that promote the attachment of RNA polymerase to specific initiation sites and are then released. This sigma factor is responsible for the expression of sporulation specific genes. This chain is RNA polymerase sigma-G factor (sigG), found in Clostridium acetobutylicum (strain ATCC 824 / DSM 792 / JCM 1419 / IAM 19013 / LMG 5710 / NBRC 13948 / NRRL B-527 / VKM B-1787 / 2291 / W).